We begin with the raw amino-acid sequence, 215 residues long: Hibernation-associated plasma protein HP-25 (215 aa).

An N-terminal signal peptide occupies residues Met-1–Ala-28. The tract at residues Asp-29–Leu-96 is disordered. Pro residues-rich tracts occupy residues Cys-39 to Pro-51 and Leu-60 to Pro-77. The 42-residue stretch at Gly-40–Val-81 folds into the Collagen-like domain. Positions Ser-85–Lys-215 constitute a C1q domain. An N-linked (GlcNAc...) asparagine glycan is attached at Asn-167.

As to expression, plasma; synthesized in the liver.

Its subcellular location is the secreted. Plasma proteins HP-20, HP-25, HP-27 and HP-55 form a 140 kDa complex via disulfide bonds in the plasma and are hibernation specific. The polypeptide is Hibernation-associated plasma protein HP-25 (Tamias sibiricus (Siberian chipmunk)).